Consider the following 212-residue polypeptide: 3,4-dihydroxy-2-butanone 4-phosphate synthase (212 aa).

Residues 37-38 (RE), Asp-42, 150-154 (RRGHT), and Glu-174 each bind D-ribulose 5-phosphate. Glu-38 serves as a coordination point for Mg(2+). Mg(2+) is bound at residue His-153.

This sequence belongs to the DHBP synthase family. As to quaternary structure, homodimer. Mg(2+) serves as cofactor. Requires Mn(2+) as cofactor.

It carries out the reaction D-ribulose 5-phosphate = (2S)-2-hydroxy-3-oxobutyl phosphate + formate + H(+). It participates in cofactor biosynthesis; riboflavin biosynthesis; 2-hydroxy-3-oxobutyl phosphate from D-ribulose 5-phosphate: step 1/1. Its function is as follows. Catalyzes the conversion of D-ribulose 5-phosphate to formate and 3,4-dihydroxy-2-butanone 4-phosphate. The sequence is that of 3,4-dihydroxy-2-butanone 4-phosphate synthase from Shewanella piezotolerans (strain WP3 / JCM 13877).